We begin with the raw amino-acid sequence, 204 residues long: Venom allergen 5 (204 aa).

Disulfide bonds link Cys-4/Cys-17, Cys-8/Cys-101, Cys-26/Cys-94, and Cys-170/Cys-187. Positions 45–189 (LKEHNDFRQK…WHKHYLVCNY (145 aa)) constitute an SCP domain.

This sequence belongs to the CRISP family. Venom allergen 5-like subfamily. Expressed by the venom gland.

The protein resides in the secreted. This is Venom allergen 5 from Vespula maculifrons (Eastern yellow jacket).